The sequence spans 580 residues: NADH-ubiquinone oxidoreductase chain 5 (580 aa).

16 consecutive transmembrane segments (helical) span residues Phe12–Met32, Ile50–Ile70, Ile92–Ile112, Ser113–Gln133, Val153–Tyr173, Met183–Phe203, Thr215–Ile235, Trp244–Gly264, Ile274–Gly293, Ala298–Ile320, Cys343–Tyr363, Leu367–Phe387, Ile427–Leu447, Leu463–Phe483, Phe496–Leu516, and Ile560–Asn580.

Belongs to the complex I subunit 5 family.

It localises to the mitochondrion inner membrane. It carries out the reaction a ubiquinone + NADH + 5 H(+)(in) = a ubiquinol + NAD(+) + 4 H(+)(out). In terms of biological role, core subunit of the mitochondrial membrane respiratory chain NADH dehydrogenase (Complex I) that is believed to belong to the minimal assembly required for catalysis. Complex I functions in the transfer of electrons from NADH to the respiratory chain. The immediate electron acceptor for the enzyme is believed to be ubiquinone. This is NADH-ubiquinone oxidoreductase chain 5 (mt:ND5) from Anopheles gambiae (African malaria mosquito).